A 389-amino-acid polypeptide reads, in one-letter code: Cytochrome f (389 aa).

Positions 1–42 are cleaved as a signal peptide; the sequence is MTTFFISKVNGPVNKSLIWLKIHIYEFFLLKFMLLFPPTVCS. Heme is bound by residues Y105, C125, C128, and H129. The chain crosses the membrane as a helical span at residues 355–375; the sequence is LQALIVFFIFVILTQLFLVLK.

The protein belongs to the cytochrome f family. As to quaternary structure, the 4 large subunits of the cytochrome b6-f complex are cytochrome b6, subunit IV (17 kDa polypeptide, petD), cytochrome f and the Rieske protein, while the 4 small subunits are PetG, PetL, PetM and PetN. The complex functions as a dimer. The cofactor is heme.

It is found in the plastid. The protein localises to the chloroplast thylakoid membrane. In terms of biological role, component of the cytochrome b6-f complex, which mediates electron transfer between photosystem II (PSII) and photosystem I (PSI), cyclic electron flow around PSI, and state transitions. This Pleurastrum terricola (Filamentous green alga) protein is Cytochrome f.